The following is a 192-amino-acid chain: MGTWILFACLLGAAYSMPLPPHPGHPGYINFSYEVLTPLKWYQNMLRYPYPSYGYEPVGGWLHHQIIPVVSQQSPQNHALQPHHHNPMVPAQQPVVPQQPMMPVPGQHSMTPIQHHQPNLPLPAQQSFQPQPIQPQPHQPLQPQPPVHPIQRLPPQPPLPPIFPMQPLPPVLPDLPLEAWPATDKTKREEVD.

A signal peptide spans 1-16; that stretch reads MGTWILFACLLGAAYS. A disordered region spans residues 73 to 192; it reads QSPQNHALQP…TDKTKREEVD (120 aa). The segment covering 87-105 has biased composition (low complexity); the sequence is PMVPAQQPVVPQQPMMPVP. Positions 108-117 are enriched in polar residues; it reads HSMTPIQHHQ. The span at 132-173 shows a compositional bias: pro residues; the sequence is PIQPQPHQPLQPQPPVHPIQRLPPQPPLPPIFPMQPLPPVLP.

It belongs to the amelogenin family.

It localises to the secreted. It is found in the extracellular space. Its subcellular location is the extracellular matrix. Functionally, plays a role in the biomineralization of teeth. Seems to regulate the formation of crystallites during the secretory stage of tooth enamel development. Thought to play a major role in the structural organization and mineralization of developing enamel. In Bos taurus (Bovine), this protein is Amelogenin, Y isoform (AMELY).